Here is a 906-residue protein sequence, read N- to C-terminus: Protein translocase subunit SecA (906 aa).

Residues Gln87, 105–109 (GEGKT), and Asp507 each bind ATP. Residues 553 to 563 (RHESRRIDNQL) are compositionally biased toward basic and acidic residues. 2 disordered regions span residues 553–576 (RHESRRIDNQLRGRSGRQGDPGSS) and 854–906 (LEEP…GRLA). Zn(2+) contacts are provided by Cys890, Cys892, Cys901, and His902. A compositionally biased stretch (basic residues) spans 896 to 906 (KKYKQCHGRLA).

The protein belongs to the SecA family. As to quaternary structure, monomer and homodimer. Part of the essential Sec protein translocation apparatus which comprises SecA, SecYEG and auxiliary proteins SecDF-YajC and YidC. Requires Zn(2+) as cofactor.

It localises to the cell inner membrane. It is found in the cytoplasm. The catalysed reaction is ATP + H2O + cellular proteinSide 1 = ADP + phosphate + cellular proteinSide 2.. Part of the Sec protein translocase complex. Interacts with the SecYEG preprotein conducting channel. Has a central role in coupling the hydrolysis of ATP to the transfer of proteins into and across the cell membrane, serving both as a receptor for the preprotein-SecB complex and as an ATP-driven molecular motor driving the stepwise translocation of polypeptide chains across the membrane. The protein is Protein translocase subunit SecA of Methylococcus capsulatus (strain ATCC 33009 / NCIMB 11132 / Bath).